A 520-amino-acid polypeptide reads, in one-letter code: Sodium-dependent dicarboxylate transporter SdcS (520 aa).

Helical transmembrane passes span 30–50 (AGQL…LLFF), 55–75 (LPWK…WWIT), 77–97 (AIPI…GHIL), 104–124 (SEYG…AIAM), 160–180 (SMFV…LAII), 207–227 (IGYA…PLII), 242–262 (FAKW…ITWL), 298–318 (KVVQ…EFLL), 323–343 (VTSS…LFII), 362–382 (ELPW…KGIS), 399–419 (GVSP…LTEV), 428–448 (MILP…LLLM), 452–472 (AMAA…AIIF), and 491–511 (LISA…VLGI).

Belongs to the SLC13A/DASS transporter (TC 2.A.47) family. NADC subfamily.

The protein resides in the cell membrane. Functionally, mediates the transport of the dicarboxylates fumarate, malate, and succinate across the cytoplasmic membrane via a Na(+)-electrochemical gradient. This Staphylococcus aureus (strain NCTC 8325 / PS 47) protein is Sodium-dependent dicarboxylate transporter SdcS (sdcS).